The following is a 170-amino-acid chain: Aspartate 1-decarboxylase (170 aa).

S25 functions as the Schiff-base intermediate with substrate; via pyruvic acid in the catalytic mechanism. S25 carries the post-translational modification Pyruvic acid (Ser). T57 is a binding site for substrate. Y58 acts as the Proton donor in catalysis. Residue 73–75 participates in substrate binding; that stretch reads GAA. The interval 118-170 is disordered; that stretch reads GHDPAEALPDDPSSLRGDLAVPGNPVTAAARRGTPTHQAPVALPASRTVVAPR.

The protein belongs to the PanD family. As to quaternary structure, heterooctamer of four alpha and four beta subunits. It depends on pyruvate as a cofactor. Is synthesized initially as an inactive proenzyme, which is activated by self-cleavage at a specific serine bond to produce a beta-subunit with a hydroxyl group at its C-terminus and an alpha-subunit with a pyruvoyl group at its N-terminus.

It localises to the cytoplasm. It catalyses the reaction L-aspartate + H(+) = beta-alanine + CO2. The protein operates within cofactor biosynthesis; (R)-pantothenate biosynthesis; beta-alanine from L-aspartate: step 1/1. Functionally, catalyzes the pyruvoyl-dependent decarboxylation of aspartate to produce beta-alanine. The chain is Aspartate 1-decarboxylase from Frankia alni (strain DSM 45986 / CECT 9034 / ACN14a).